The chain runs to 706 residues: Fatty acid oxidation complex subunit alpha (706 aa).

Positions 1-188 (MEKTFNLTRR…KMGLVNDVVP (188 aa)) are enoyl-CoA hydratase. Residues 308 to 706 (RKVKKAVILG…TMARENVSFF (399 aa)) are 3-hydroxyacyl-CoA dehydrogenase.

In the N-terminal section; belongs to the enoyl-CoA hydratase/isomerase family. It in the central section; belongs to the 3-hydroxyacyl-CoA dehydrogenase family. In terms of assembly, heterotetramer of two alpha chains (FadJ) and two beta chains (FadI).

The protein localises to the cytoplasm. The enzyme catalyses a (3S)-3-hydroxyacyl-CoA = a (2E)-enoyl-CoA + H2O. The catalysed reaction is a 4-saturated-(3S)-3-hydroxyacyl-CoA = a (3E)-enoyl-CoA + H2O. It catalyses the reaction a (3S)-3-hydroxyacyl-CoA + NAD(+) = a 3-oxoacyl-CoA + NADH + H(+). It carries out the reaction (3S)-3-hydroxybutanoyl-CoA = (3R)-3-hydroxybutanoyl-CoA. It participates in lipid metabolism; fatty acid beta-oxidation. Catalyzes the formation of a hydroxyacyl-CoA by addition of water on enoyl-CoA. Also exhibits 3-hydroxyacyl-CoA epimerase and 3-hydroxyacyl-CoA dehydrogenase activities. The chain is Fatty acid oxidation complex subunit alpha from Shewanella sp. (strain W3-18-1).